The chain runs to 142 residues: Large ribosomal subunit protein uL22c (142 aa).

Belongs to the universal ribosomal protein uL22 family. In terms of assembly, part of the 50S ribosomal subunit.

It is found in the plastid. Its subcellular location is the chloroplast. Functionally, this protein binds specifically to 23S rRNA. The globular domain of the protein is located near the polypeptide exit tunnel on the outside of the subunit, while an extended beta-hairpin is found that lines the wall of the exit tunnel in the center of the 70S ribosome. This chain is Large ribosomal subunit protein uL22c (rpl22), found in Carica papaya (Papaya).